A 531-amino-acid polypeptide reads, in one-letter code: Apolipoprotein N-acyltransferase (531 aa).

Transmembrane regions (helical) follow at residues 8–28, 34–54, 74–94, 105–125, 128–148, 178–198, and 206–226; these read IILL…LLAM, FGIF…IDGV, WSFG…AFLV, LAVV…VLVA, LWSD…VAEW, VLNV…PALI, and VGLA…YYRL. One can recognise a CN hydrolase domain in the interval 243–493; the sequence is VQPVIDQAKK…KGVTDAILPG (251 aa). Glu287 functions as the Proton acceptor in the catalytic mechanism. Residue Lys351 is part of the active site. The Nucleophile role is filled by Cys405. A helical membrane pass occupies residues 501–521; that stretch reads SMLRGRIFWFTGVFLLLVAAI.

This sequence belongs to the CN hydrolase family. Apolipoprotein N-acyltransferase subfamily.

It is found in the cell inner membrane. The enzyme catalyses N-terminal S-1,2-diacyl-sn-glyceryl-L-cysteinyl-[lipoprotein] + a glycerophospholipid = N-acyl-S-1,2-diacyl-sn-glyceryl-L-cysteinyl-[lipoprotein] + a 2-acyl-sn-glycero-3-phospholipid + H(+). It functions in the pathway protein modification; lipoprotein biosynthesis (N-acyl transfer). Catalyzes the phospholipid dependent N-acylation of the N-terminal cysteine of apolipoprotein, the last step in lipoprotein maturation. The polypeptide is Apolipoprotein N-acyltransferase (Sinorhizobium fredii (strain NBRC 101917 / NGR234)).